The following is a 320-amino-acid chain: Biotin synthase (320 aa).

Positions 43–270 (GAVQKSQLLS…KSWVRLSAGR (228 aa)) constitute a Radical SAM core domain. [4Fe-4S] cluster contacts are provided by Cys-58, Cys-62, and Cys-65. [2Fe-2S] cluster contacts are provided by Cys-102, Cys-133, Cys-193, and Arg-265.

Belongs to the radical SAM superfamily. Biotin synthase family. As to quaternary structure, homodimer. Requires [4Fe-4S] cluster as cofactor. It depends on [2Fe-2S] cluster as a cofactor.

The catalysed reaction is (4R,5S)-dethiobiotin + (sulfur carrier)-SH + 2 reduced [2Fe-2S]-[ferredoxin] + 2 S-adenosyl-L-methionine = (sulfur carrier)-H + biotin + 2 5'-deoxyadenosine + 2 L-methionine + 2 oxidized [2Fe-2S]-[ferredoxin]. The protein operates within cofactor biosynthesis; biotin biosynthesis; biotin from 7,8-diaminononanoate: step 2/2. Functionally, catalyzes the conversion of dethiobiotin (DTB) to biotin by the insertion of a sulfur atom into dethiobiotin via a radical-based mechanism. In Hyphomonas neptunium (strain ATCC 15444), this protein is Biotin synthase.